Here is a 251-residue protein sequence, read N- to C-terminus: MSLVNKRAVAAAFGRAAQSYDSHAQLQRQSADLLLAKLGERRPASVLDAGCGPGSMSRYWRDAGAEVTALDLSLPMLRQAQSQQAAQHYVAADIEALPLADARFDLAWSNLAVQWCNDLGQALKSLHRVVRPGGAVAFTTLASGSLPELHQAWQAVDSRLHANRFLAEETLAETVSAWRGQWGIEPVTLAFDDALAAMRSLKGIGATHLHAGRHNTPLTRGQLQRLQLAWPQQQGRCLLTYSLFWGVIERD.

It belongs to the methyltransferase superfamily.

The catalysed reaction is malonyl-[ACP] + S-adenosyl-L-methionine = malonyl-[ACP] methyl ester + S-adenosyl-L-homocysteine. Its pathway is cofactor biosynthesis; biotin biosynthesis. In terms of biological role, converts the free carboxyl group of a malonyl-thioester to its methyl ester by transfer of a methyl group from S-adenosyl-L-methionine (SAM). It allows to synthesize pimeloyl-ACP via the fatty acid synthetic pathway. In Pseudescherichia vulneris (Escherichia vulneris), this protein is Malonyl-[acyl-carrier protein] O-methyltransferase.